The chain runs to 74 residues: Protein kish-B (74 aa).

Residues 1–22 (MTNVYSLDGLLVFALLFVCTCA) form the signal peptide. At 23 to 52 (YFRKVPRLRSWLLSEKKGVWGVFYKAAVIG) the chain is on the extracellular side. A helical membrane pass occupies residues 53 to 73 (SRLHLAVSISCIAMAFYVLFI). Position 74 (Lys74) is a topological domain, cytoplasmic.

It belongs to the KISH family.

The protein localises to the golgi apparatus membrane. Involved in the early part of the secretory pathway. The chain is Protein kish-B (tmem167b) from Xenopus laevis (African clawed frog).